Reading from the N-terminus, the 463-residue chain is Immune-associated nucleotide-binding protein 10 (463 aa).

Positions 3 to 211 (EPIKNIVLVG…YTYQLHRKIK (209 aa)) constitute an AIG1-type G domain. Residues 12–19 (GRTGNGKS) form a G1 region. GTP contacts are provided by residues 12-20 (GRTGNGKSS) and serine 33. Residues 39–43 (GVTMI) are G2. Positions 61–64 (DTPG) are G3. The tract at residues 131 to 134 (TGGD) is G4. The G5 stretch occupies residues 170 to 172 (DNK). A GTP-binding site is contributed by asparagine 171. Residues 173-308 (SKDEKKKVEQ…KQLIAQANRM (136 aa)) adopt a coiled-coil conformation.

It belongs to the TRAFAC class TrmE-Era-EngA-EngB-Septin-like GTPase superfamily. AIG1/Toc34/Toc159-like paraseptin GTPase family. IAN subfamily. As to expression, expressed in radicles of the germinating seeds.

The chain is Immune-associated nucleotide-binding protein 10 from Arabidopsis thaliana (Mouse-ear cress).